A 65-amino-acid chain; its full sequence is Large ribosomal subunit protein bL33m (65 aa).

Residues M1–F8 constitute a mitochondrion transit peptide.

This sequence belongs to the bacterial ribosomal protein bL33 family. As to quaternary structure, component of the mitochondrial large ribosomal subunit (mt-LSU). Mature mammalian 55S mitochondrial ribosomes consist of a small (28S) and a large (39S) subunit. The 28S small subunit contains a 12S ribosomal RNA (12S mt-rRNA) and 30 different proteins. The 39S large subunit contains a 16S rRNA (16S mt-rRNA), a copy of mitochondrial valine transfer RNA (mt-tRNA(Val)), which plays an integral structural role, and 52 different proteins.

The protein localises to the mitochondrion. In Homo sapiens (Human), this protein is Large ribosomal subunit protein bL33m (MRPL33).